The primary structure comprises 657 residues: Autophagy-related protein 22 (657 aa).

Residues 1 to 15 (MAPNLQPQPQSQLQR) are compositionally biased toward low complexity. The segment at 1–78 (MAPNLQPQPQ…VVPRHFGHDA (78 aa)) is disordered. Residues 1–91 (MAPNLQPQPQ…SRRELLGWYA (91 aa)) lie on the Cytoplasmic side of the membrane. Residues 26–40 (GLSNISKRSFRSCAT) show a composition bias toward polar residues. Residues 92–112 (YAFAAETYVICGIASFIPILL) traverse the membrane as a helical segment. Residues 113 to 155 (ETLARENGVLVSDRKTPCGSSDSKNDGDGQCIVWVFGMEINTA) lie on the Vacuolar side of the membrane. The helical transmembrane segment at 156–176 (SFAMYTFSVSVLVQALLVVSI) threads the bilayer. At 177–187 (SCAADHGNYRK) the chain is on the cytoplasmic side. The helical transmembrane segment at 188 to 208 (KLLLTFAWIGSFAVMSYIFIT) threads the bilayer. At 209–212 (KDNY) the chain is on the vacuolar side. A helical membrane pass occupies residues 213–233 (ILGALLTVISNTSFGASFVLL). Topologically, residues 234 to 317 (NSFLPLLVRY…ELELSTRISA (84 aa)) are cytoplasmic. The chain crosses the membrane as a helical span at residues 318 to 338 (IGIGTGYIAALFLQCICIGVL). At 339–349 (ISLHNTTWGQR) the chain is on the vacuolar side. Asn-343 is a glycosylation site (N-linked (GlcNAc...) asparagine). A helical transmembrane segment spans residues 350–370 (VVLFMVGVWWTVFTIPAAMWL). Residues 371-384 (RPRPGPPLADNGRK) lie on the Cytoplasmic side of the membrane. The helical transmembrane segment at 385–405 (GIMAGLAYILYAWKSLFKTIQ) threads the bilayer. Over 406–409 (QARR) the chain is Vacuolar. A helical transmembrane segment spans residues 410–430 (LLDIVLFLAGWFLLSDAIATT). At 431–446 (SSTAILFAKTQLHMKP) the chain is on the cytoplasmic side. The helical transmembrane segment at 447–467 (WALGMINVISTTAGVFGAFGW) threads the bilayer. Residues 468-481 (SWVSRLFNLKAHQT) lie on the Vacuolar side of the membrane. The helical transmembrane segment at 482-502 (ILVCIALFELIPLYGLLGYLP) threads the bilayer. Over 503 to 515 (FVKNWGVFGLQQP) the chain is Cytoplasmic. Residues 516 to 536 (WEMYPLAAVYGVVLGGLSGYC) form a helical membrane-spanning segment. Residues 537–554 (RSLYGELIPPGSEAAFYA) lie on the Vacuolar side of the membrane. A helical membrane pass occupies residues 555–575 (LYAITDKGSSVFGPTIVGAII). Topologically, residues 576–583 (DRTGTIRP) are cytoplasmic. The chain crosses the membrane as a helical span at residues 584-604 (AFWFLAVLVGFPAPLIWFIDV). Residues 605–657 (ERGRREGAKLAKSITDSIVQEEDESDDGAERRGMLSDYEREHGQSIDDERAGR) are Vacuolar-facing. Residues 615-657 (AKSITDSIVQEEDESDDGAERRGMLSDYEREHGQSIDDERAGR) form a disordered region. Residues 632-657 (GAERRGMLSDYEREHGQSIDDERAGR) are compositionally biased toward basic and acidic residues.

This sequence belongs to the ATG22 family.

The protein localises to the vacuole membrane. Its function is as follows. Vacuolar effluxer which mediate the efflux of leucine and other amino acids resulting from autophagic degradation. The release of autophagic amino acids allows the maintenance of protein synthesis and viability during nitrogen starvation. Autophagy is required for proper vegetative growth, asexual/sexual reproduction, and full virulence. Autophagy is particularly involved in the biosynthesis of deoxynivalenol (DON), an important virulence determinant. In Gibberella zeae (strain ATCC MYA-4620 / CBS 123657 / FGSC 9075 / NRRL 31084 / PH-1) (Wheat head blight fungus), this protein is Autophagy-related protein 22.